The following is a 309-amino-acid chain: NAD kinase (309 aa).

Asp89 functions as the Proton acceptor in the catalytic mechanism. NAD(+) is bound by residues 89–90 (DG), 163–164 (NE), His174, Arg191, Asp193, and 204–209 (TAYSLS).

It belongs to the NAD kinase family. A divalent metal cation serves as cofactor.

The protein resides in the cytoplasm. It catalyses the reaction NAD(+) + ATP = ADP + NADP(+) + H(+). Involved in the regulation of the intracellular balance of NAD and NADP, and is a key enzyme in the biosynthesis of NADP. Catalyzes specifically the phosphorylation on 2'-hydroxyl of the adenosine moiety of NAD to yield NADP. This chain is NAD kinase, found in Shewanella denitrificans (strain OS217 / ATCC BAA-1090 / DSM 15013).